Consider the following 305-residue polypeptide: Protein hrde-2 (305 aa).

2 disordered regions span residues 211–233 and 267–305; these read AEMV…PVPA and EMSN…EYCQ. The segment covering 215–227 has biased composition (polar residues); the sequence is PSNTTGSSGSPMS. The segment covering 268 to 287 has biased composition (acidic residues); sequence MSNDEYSPDESENDENEYDY. Over residues 289–305 the composition is skewed to basic and acidic residues; sequence NAARYDDGYDEGHEYCQ.

Expressed throughout the male and female germline.

The protein resides in the nucleus. Plays a role in germline RNA interference (RNAi), and in particular is required for piwi-interacting RNA (piRNA) gene silencing. Facilitates the binding of the argonaut protein hrde-1 to small interfering RNAs (siRNAs) targets that are required for transgenerational epigenetic inheritance and germline immortality. In Caenorhabditis elegans, this protein is Protein hrde-2.